A 262-amino-acid chain; its full sequence is Phosphatidylserine decarboxylase proenzyme (262 aa).

Active-site charge relay system; for autoendoproteolytic cleavage activity residues include Asp-86, His-142, and Ser-226. Catalysis depends on Ser-226, which acts as the Schiff-base intermediate with substrate; via pyruvic acid; for decarboxylase activity. Ser-226 is modified (pyruvic acid (Ser); by autocatalysis).

This sequence belongs to the phosphatidylserine decarboxylase family. PSD-B subfamily. Prokaryotic type I sub-subfamily. In terms of assembly, heterodimer of a large membrane-associated beta subunit and a small pyruvoyl-containing alpha subunit. Pyruvate is required as a cofactor. Post-translationally, is synthesized initially as an inactive proenzyme. Formation of the active enzyme involves a self-maturation process in which the active site pyruvoyl group is generated from an internal serine residue via an autocatalytic post-translational modification. Two non-identical subunits are generated from the proenzyme in this reaction, and the pyruvate is formed at the N-terminus of the alpha chain, which is derived from the carboxyl end of the proenzyme. The autoendoproteolytic cleavage occurs by a canonical serine protease mechanism, in which the side chain hydroxyl group of the serine supplies its oxygen atom to form the C-terminus of the beta chain, while the remainder of the serine residue undergoes an oxidative deamination to produce ammonia and the pyruvoyl prosthetic group on the alpha chain. During this reaction, the Ser that is part of the protease active site of the proenzyme becomes the pyruvoyl prosthetic group, which constitutes an essential element of the active site of the mature decarboxylase.

The protein localises to the cell membrane. It catalyses the reaction a 1,2-diacyl-sn-glycero-3-phospho-L-serine + H(+) = a 1,2-diacyl-sn-glycero-3-phosphoethanolamine + CO2. The protein operates within phospholipid metabolism; phosphatidylethanolamine biosynthesis; phosphatidylethanolamine from CDP-diacylglycerol: step 2/2. Its function is as follows. Catalyzes the formation of phosphatidylethanolamine (PtdEtn) from phosphatidylserine (PtdSer). The polypeptide is Phosphatidylserine decarboxylase proenzyme (Bacillus mycoides (strain KBAB4) (Bacillus weihenstephanensis)).